Here is a 106-residue protein sequence, read N- to C-terminus: Urease subunit beta (106 aa).

It belongs to the urease beta subunit family. As to quaternary structure, heterotrimer of UreA (gamma), UreB (beta) and UreC (alpha) subunits. Three heterotrimers associate to form the active enzyme.

It localises to the cytoplasm. The enzyme catalyses urea + 2 H2O + H(+) = hydrogencarbonate + 2 NH4(+). It functions in the pathway nitrogen metabolism; urea degradation; CO(2) and NH(3) from urea (urease route): step 1/1. The protein is Urease subunit beta of Synechococcus sp. (strain WH7805).